A 157-amino-acid polypeptide reads, in one-letter code: N-acetylgalactosamine-specific phosphotransferase enzyme IIB component 2 (157 aa).

Residues 1 to 157 form the PTS EIIB type-4 domain; sequence MPNIVLSRID…EPAVDLFKLL (157 aa). His-15 functions as the Pros-phosphohistidine intermediate in the catalytic mechanism.

The protein resides in the cytoplasm. In terms of biological role, the phosphoenolpyruvate-dependent sugar phosphotransferase system (sugar PTS), a major carbohydrate active -transport system, catalyzes the phosphorylation of incoming sugar substrates concomitantly with their translocation across the cell membrane. This system is involved in N-acetylgalactosamine transport. The chain is N-acetylgalactosamine-specific phosphotransferase enzyme IIB component 2 (agaV) from Escherichia coli (strain K12).